Consider the following 464-residue polypeptide: Argininosuccinate lyase (464 aa).

It belongs to the lyase 1 family. Argininosuccinate lyase subfamily.

The protein localises to the cytoplasm. It carries out the reaction 2-(N(omega)-L-arginino)succinate = fumarate + L-arginine. Its pathway is amino-acid biosynthesis; L-arginine biosynthesis; L-arginine from L-ornithine and carbamoyl phosphate: step 3/3. This is Argininosuccinate lyase from Pseudomonas paraeruginosa (strain DSM 24068 / PA7) (Pseudomonas aeruginosa (strain PA7)).